Reading from the N-terminus, the 327-residue chain is GTPase Obg (327 aa).

One can recognise an Obg domain in the interval 2–160 (HILKDSLSIT…LNLRLELSLI (159 aa)). Positions 161-326 (ADIGLVGFPN…LVSELFALSR (166 aa)) constitute an OBG-type G domain. GTP is bound by residues 167 to 174 (GFPNAGKS), 192 to 196 (FTTRF), 213 to 216 (DVPG), 280 to 283 (NKLD), and 307 to 309 (SIY). The Mg(2+) site is built by Ser174 and Thr194.

It belongs to the TRAFAC class OBG-HflX-like GTPase superfamily. OBG GTPase family. As to quaternary structure, monomer. Mg(2+) is required as a cofactor.

Its subcellular location is the cytoplasm. Functionally, an essential GTPase which binds GTP, GDP and possibly (p)ppGpp with moderate affinity, with high nucleotide exchange rates and a fairly low GTP hydrolysis rate. Plays a role in control of the cell cycle, stress response, ribosome biogenesis and in those bacteria that undergo differentiation, in morphogenesis control. The polypeptide is GTPase Obg (Borrelia hermsii (strain HS1 / DAH)).